The sequence spans 190 residues: dCTP deaminase (190 aa).

Position 113–118 (113–118 (KSTYAR)) interacts with dCTP. The active-site Proton donor/acceptor is E139. Positions 158, 172, 181, and 182 each coordinate dCTP.

Belongs to the dCTP deaminase family. In terms of assembly, homotrimer.

The enzyme catalyses dCTP + H2O + H(+) = dUTP + NH4(+). Its pathway is pyrimidine metabolism; dUMP biosynthesis; dUMP from dCTP (dUTP route): step 1/2. In terms of biological role, catalyzes the deamination of dCTP to dUTP. In Chlamydia abortus (strain DSM 27085 / S26/3) (Chlamydophila abortus), this protein is dCTP deaminase.